The primary structure comprises 247 residues: Adenosylcobinamide-GDP ribazoletransferase (247 aa).

5 helical membrane-spanning segments follow: residues 34-54 (IVMF…IFIL), 59-79 (CGIP…TGGF), 113-133 (GGLA…ELAL), 138-158 (MLAA…LLMY), and 187-207 (LAVI…AMVV).

Belongs to the CobS family. Mg(2+) is required as a cofactor.

The protein resides in the cell inner membrane. The enzyme catalyses alpha-ribazole + adenosylcob(III)inamide-GDP = adenosylcob(III)alamin + GMP + H(+). It catalyses the reaction alpha-ribazole 5'-phosphate + adenosylcob(III)inamide-GDP = adenosylcob(III)alamin 5'-phosphate + GMP + H(+). The protein operates within cofactor biosynthesis; adenosylcobalamin biosynthesis; adenosylcobalamin from cob(II)yrinate a,c-diamide: step 7/7. Functionally, joins adenosylcobinamide-GDP and alpha-ribazole to generate adenosylcobalamin (Ado-cobalamin). Also synthesizes adenosylcobalamin 5'-phosphate from adenosylcobinamide-GDP and alpha-ribazole 5'-phosphate. This is Adenosylcobinamide-GDP ribazoletransferase from Salmonella dublin (strain CT_02021853).